The following is a 691-amino-acid chain: WD repeat-containing protein 48 homolog (691 aa).

WD repeat units lie at residues 27 to 82, 88 to 130, 133 to 168, 180 to 219, 222 to 261, 264 to 303, 306 to 347, and 399 to 438; these read LHRS…PVQY, RHTD…YLDS, LHTDYVSCLAYAPLAEKVVSASFDRNIFVYDVNSNF, GCKNSIYSLATTPNLSHCLFFSPHQQIRMFDPRTNDKPMK, GHSDNVRALLLNDDGTRALSAGSDGTIRLWDIGMQKNIAT, AHEEGVWTIQVDASFKFVYSGGRDRYVLKSPVNDLSKFQV, KEEA…QNSN, and SGAPAINKYKILNDKRHVLTSDTEDNVALYDVLAGKKVKE.

Belongs to the WD repeat WDR48 family. As to quaternary structure, interacts with usp-46; the interaction increases the catalytic activity of usp-46 in the presence of wdr-20.

Functionally, together with wdr-20, binds to and stimulates the activity of the deubiquitinating enzyme usp-46, leading to deubiquitination and stabilization of the glr-1 glutamate receptor. The protein is WD repeat-containing protein 48 homolog (wdr-48) of Caenorhabditis briggsae.